We begin with the raw amino-acid sequence, 257 residues long: Thiazole synthase (257 aa).

K96 serves as the catalytic Schiff-base intermediate with DXP. Residues G157, 184 to 185, and 206 to 207 contribute to the 1-deoxy-D-xylulose 5-phosphate site; these read AG and NT.

Belongs to the ThiG family. Homotetramer. Forms heterodimers with either ThiH or ThiS.

The protein resides in the cytoplasm. It carries out the reaction [ThiS sulfur-carrier protein]-C-terminal-Gly-aminoethanethioate + 2-iminoacetate + 1-deoxy-D-xylulose 5-phosphate = [ThiS sulfur-carrier protein]-C-terminal Gly-Gly + 2-[(2R,5Z)-2-carboxy-4-methylthiazol-5(2H)-ylidene]ethyl phosphate + 2 H2O + H(+). The protein operates within cofactor biosynthesis; thiamine diphosphate biosynthesis. Its function is as follows. Catalyzes the rearrangement of 1-deoxy-D-xylulose 5-phosphate (DXP) to produce the thiazole phosphate moiety of thiamine. Sulfur is provided by the thiocarboxylate moiety of the carrier protein ThiS. In vitro, sulfur can be provided by H(2)S. In Rhizobium etli (strain ATCC 51251 / DSM 11541 / JCM 21823 / NBRC 15573 / CFN 42), this protein is Thiazole synthase.